Here is a 152-residue protein sequence, read N- to C-terminus: Xanthine-guanine phosphoribosyltransferase (152 aa).

Residues 37–38, Arg69, and 88–96 each bind 5-phospho-alpha-D-ribose 1-diphosphate; these read RG and DDLVDTGGT. Arg69 contributes to the GMP binding site. Residue Asp89 participates in Mg(2+) binding. Residues Asp92 and Ile135 each coordinate guanine. Positions 92 and 135 each coordinate xanthine. GMP-binding positions include 92–96 and 134–135; these read DTGGT and WI.

This sequence belongs to the purine/pyrimidine phosphoribosyltransferase family. XGPT subfamily. As to quaternary structure, homotetramer. Requires Mg(2+) as cofactor.

The protein localises to the cell inner membrane. It carries out the reaction GMP + diphosphate = guanine + 5-phospho-alpha-D-ribose 1-diphosphate. The catalysed reaction is XMP + diphosphate = xanthine + 5-phospho-alpha-D-ribose 1-diphosphate. The enzyme catalyses IMP + diphosphate = hypoxanthine + 5-phospho-alpha-D-ribose 1-diphosphate. The protein operates within purine metabolism; GMP biosynthesis via salvage pathway; GMP from guanine: step 1/1. It functions in the pathway purine metabolism; XMP biosynthesis via salvage pathway; XMP from xanthine: step 1/1. Its function is as follows. Purine salvage pathway enzyme that catalyzes the transfer of the ribosyl-5-phosphate group from 5-phospho-alpha-D-ribose 1-diphosphate (PRPP) to the N9 position of the 6-oxopurines guanine and xanthine to form the corresponding ribonucleotides GMP (guanosine 5'-monophosphate) and XMP (xanthosine 5'-monophosphate), with the release of PPi. To a lesser extent, also acts on hypoxanthine. The sequence is that of Xanthine-guanine phosphoribosyltransferase from Erwinia tasmaniensis (strain DSM 17950 / CFBP 7177 / CIP 109463 / NCPPB 4357 / Et1/99).